A 484-amino-acid chain; its full sequence is MDDLESTCASLRAQISATETQLAGLKRALHEAEQAAAHAKAQSAAATTAGDNHDKPRRWPLLDEEYRRYGRQMIVPQLGLPGQLKLRSARVLIVGAGGLGCPAALYLAGAGVGTLGLIDGDMVDVSNLHRQVLHRSANVGKLKVDSAIEYLRELNPHPTYIPHRAHLTPQEAPEIFQNYDVILDCTDNPATRYLISDTAVLLGKPLVSASALRTEGQLMVLNNPPRPAGDKTGGPCYRCVFPKPPPANSILSCADGGILGPVVGTMGVLQALEAIKVITSTEDEVRPPSLHIFSAYSSPPFRSIKLRSRRANCAVCSAERQVTLDTLRSGLTDYVFFCGSVSPEAVLTAEERIAPREYRAMYPAPTEGAPEKTPTLIDVREKVQYDICNLAESINIPISTIQASAAGSGDETGSSLPAWLPPEIASTDSTDPIYVVCRMGNDSQLAVRRLKELGLDRGGARVVADIQGGFRAWREQVDPEWPEY.

Low complexity predominate over residues 39–49; the sequence is AKAQSAAATTA. Positions 39-58 are disordered; that stretch reads AKAQSAAATTAGDNHDKPRR. ATP is bound by residues G98, D119, 126-130, K143, and 187-188; these read SNLHR and DN. Zn(2+) contacts are provided by C236 and C239. Catalysis depends on C253, which acts as the Glycyl thioester intermediate; for adenylyltransferase activity. The Zn(2+) site is built by C313 and C316. The 113-residue stretch at 370–482 folds into the Rhodanese domain; the sequence is PEKTPTLIDV…WREQVDPEWP (113 aa). The active-site Cysteine persulfide intermediate; for sulfurtransferase activity is C437.

The protein in the N-terminal section; belongs to the HesA/MoeB/ThiF family. UBA4 subfamily. It depends on Zn(2+) as a cofactor.

It is found in the cytoplasm. The protein localises to the cytosol. The catalysed reaction is [molybdopterin-synthase sulfur-carrier protein]-C-terminal Gly-Gly + ATP + H(+) = [molybdopterin-synthase sulfur-carrier protein]-C-terminal Gly-Gly-AMP + diphosphate. It catalyses the reaction [molybdopterin-synthase sulfur-carrier protein]-C-terminal Gly-Gly-AMP + S-sulfanyl-L-cysteinyl-[cysteine desulfurase] + AH2 = [molybdopterin-synthase sulfur-carrier protein]-C-terminal-Gly-aminoethanethioate + L-cysteinyl-[cysteine desulfurase] + A + AMP + 2 H(+). The protein operates within tRNA modification; 5-methoxycarbonylmethyl-2-thiouridine-tRNA biosynthesis. Its pathway is cofactor biosynthesis; molybdopterin biosynthesis. Plays a central role in 2-thiolation of mcm(5)S(2)U at tRNA wobble positions of cytosolic tRNA(Lys), tRNA(Glu) and tRNA(Gln). Also essential during biosynthesis of the molybdenum cofactor. Acts by mediating the C-terminal thiocarboxylation of sulfur carriers urm1 and mocs2a. Its N-terminus first activates urm1 and mocs2a as acyl-adenylates (-COAMP), then the persulfide sulfur on the catalytic cysteine is transferred to urm1 and mocs2a to form thiocarboxylation (-COSH) of their C-terminus. The reaction probably involves hydrogen sulfide that is generated from the persulfide intermediate and that acts as a nucleophile towards urm1 and mocs2a. Subsequently, a transient disulfide bond is formed. Does not use thiosulfate as sulfur donor; nfs1 probably acting as a sulfur donor for thiocarboxylation reactions. The sequence is that of Adenylyltransferase and sulfurtransferase uba4 from Aspergillus terreus (strain NIH 2624 / FGSC A1156).